The following is a 324-amino-acid chain: Acetyl-coenzyme A carboxylase carboxyl transferase subunit alpha (324 aa).

One can recognise a CoA carboxyltransferase C-terminal domain in the interval 37–291 (ILEDKLENLE…NVVLQKTFEQ (255 aa)).

Belongs to the AccA family. In terms of assembly, acetyl-CoA carboxylase is a heterohexamer composed of biotin carboxyl carrier protein (AccB), biotin carboxylase (AccC) and two subunits each of ACCase subunit alpha (AccA) and ACCase subunit beta (AccD).

Its subcellular location is the cytoplasm. The enzyme catalyses N(6)-carboxybiotinyl-L-lysyl-[protein] + acetyl-CoA = N(6)-biotinyl-L-lysyl-[protein] + malonyl-CoA. The protein operates within lipid metabolism; malonyl-CoA biosynthesis; malonyl-CoA from acetyl-CoA: step 1/1. Component of the acetyl coenzyme A carboxylase (ACC) complex. First, biotin carboxylase catalyzes the carboxylation of biotin on its carrier protein (BCCP) and then the CO(2) group is transferred by the carboxyltransferase to acetyl-CoA to form malonyl-CoA. This is Acetyl-coenzyme A carboxylase carboxyl transferase subunit alpha from Bacillus cytotoxicus (strain DSM 22905 / CIP 110041 / 391-98 / NVH 391-98).